The chain runs to 872 residues: Serine/threonine-protein phosphatase 1 regulatory subunit 10 (872 aa).

An interaction with TOX4 region spans residues 1 to 348; that stretch reads MGSGPIDPKE…EPAAPAEPMD (348 aa). The region spanning 73–147 is the TFIIS N-terminal domain; it reads KLLNSWLTYS…SDWMAVIRSQ (75 aa). 4 disordered regions span residues 147 to 213, 247 to 270, 307 to 398, and 534 to 837; these read QSST…STGL, SATA…NTTP, KKKK…KRKT, and VETL…HGGD. 2 stretches are compositionally biased toward basic and acidic residues: residues 153–166 and 174–196; these read AEKD…EGKS and PLTE…EKPK. Lys179 is covalently cross-linked (Glycyl lysine isopeptide (Lys-Gly) (interchain with G-Cter in SUMO2)). A compositionally biased stretch (low complexity) spans 248-258; the sequence is ATAAPGDAAPP. Lys262 participates in a covalent cross-link: Glycyl lysine isopeptide (Lys-Gly) (interchain with G-Cter in SUMO2). Position 313 is a phosphoserine (Ser313). The segment covering 325–336 has biased composition (low complexity); the sequence is KTSTEPSTAKPS. The necessary for interaction with PPP1CA stretch occupies residues 357-433; it reads PAVEVPELMD…NKIKDFGEAA (77 aa). Ser382 bears the Phosphoserine mark. Residues 393-408 form a necessary for interaction with PPP1CC region; sequence GRKRKTVTWPEEGKLR. The short motif at 394-423 is the PP1-binding motif element; it reads RKRKTVTWPEEGKLREYFYFELDETERVNV. A Phosphothreonine; by PKA modification is found at Thr398. The interaction with WDR82 stretch occupies residues 418–619; the sequence is TERVNVNKIK…LKQMLVPHGL (202 aa). Residues 540–551 show a composition bias toward gly residues; the sequence is GGSGGSPDGAGG. Residues Ser545 and Ser591 each carry the phosphoserine modification. Residues 583-595 are compositionally biased toward polar residues; it reads EILTSIMGSPNNH. A compositionally biased stretch (basic and acidic residues) spans 596-611; that stretch reads PSEELLKQPDYSDKLK. Positions 644–655 are enriched in pro residues; the sequence is PPGPGGPMPGPH. Residue Arg665 is modified to Omega-N-methylarginine. Positions 674-690 are enriched in low complexity; it reads RGGDPFWDGPGDPMRGG. Omega-N-methylarginine occurs at positions 693 and 737. Residues 724-762 show a composition bias toward gly residues; it reads ARGGRSGGGPPNGRGGPGGGGMVGGGGHRPHEGPGGSMG. The span at 795-835 shows a compositional bias: basic and acidic residues; the sequence is PHDVPSHRGHDHRGPPPHEHRGHDGHGGGGHRGHDGGHSHG. The C3H1-type zinc-finger motif lies at 838–866; it reads MSNRPVCRHFMMKGNCRYENNCAFYHPGV.

Component of the PNUTS-PP1 complex (also named PTW/PP1 complex), composed of PPP1R10/PNUTS, TOX4, WDR82, and PPP1CA (or PPP1CB or PPP1CC). Phosphorylated on Thr-398 by PKA within the region necessary for interaction with PPP1CA. In terms of tissue distribution, expressed in testis, brain and intestine (at protein level). Highly expressed in testis.

The protein localises to the nucleus. Its subcellular location is the chromosome. Its function is as follows. Substrate-recognition component of the PNUTS-PP1 protein phosphatase complex, a protein phosphatase 1 (PP1) complex that promotes RNA polymerase II transcription pause-release, allowing transcription elongation. Promoter-proximal pausing by RNA polymerase II is a transcription halt following transcription initiation but prior to elongation, which acts as a checkpoint to control that transcripts are favorably configured for transcriptional elongation. The PNUTS-PP1 complex mediates the release of RNA polymerase II from promoter-proximal region of genes by catalyzing dephosphorylation of proteins involved in transcription, such as AFF4, CDK9, MEPCE, INTS12, NCBP1, POLR2M/GDOWN1 and SUPT6H. The PNUTS-PP1 complex also regulates RNA polymerase II transcription termination by mediating dephosphorylation of SUPT5H in termination zones downstream of poly(A) sites, thereby promoting deceleration of RNA polymerase II transcription. PNUTS-PP1 complex is also involved in the response to replication stress by mediating dephosphorylation of POLR2A at 'Ser-5' of the CTD, promoting RNA polymerase II degradation. The PNUTS-PP1 complex also plays a role in the control of chromatin structure and cell cycle progression during the transition from mitosis into interphase. PNUTS-PP1 complex mediates dephosphorylation of MYC, promoting MYC stability by preventing MYC ubiquitination by the SCF(FBXW7) complex. In addition to acts as a substrate-recognition component, PPP1R10/PNUTS also acts as a nuclear targeting subunit for the PNUTS-PP1 complex. In some context, PPP1R10/PNUTS also acts as an inhibitor of protein phosphatase 1 (PP1) activity by preventing access to substrates. The chain is Serine/threonine-protein phosphatase 1 regulatory subunit 10 from Rattus norvegicus (Rat).